A 175-amino-acid polypeptide reads, in one-letter code: Adenine phosphoribosyltransferase (175 aa).

This sequence belongs to the purine/pyrimidine phosphoribosyltransferase family. Homodimer.

Its subcellular location is the cytoplasm. It carries out the reaction AMP + diphosphate = 5-phospho-alpha-D-ribose 1-diphosphate + adenine. It participates in purine metabolism; AMP biosynthesis via salvage pathway; AMP from adenine: step 1/1. Functionally, catalyzes a salvage reaction resulting in the formation of AMP, that is energically less costly than de novo synthesis. The polypeptide is Adenine phosphoribosyltransferase (Pelagibacter ubique (strain HTCC1062)).